A 410-amino-acid polypeptide reads, in one-letter code: Serine proteinase inhibitor A3K (410 aa).

The N-terminal stretch at 1–24 is a signal peptide; sequence MPSAISRGLLLLAGLCYLVFGIMA. Asn62, Asn99, Asn162, Asn229, and Asn263 each carry an N-linked (GlcNAc...) asparagine glycan. Residues 360–381 form an RCL region; that stretch reads GTEAAAATVLEATRTARPPRLS.

The protein belongs to the serpin family.

The protein resides in the secreted. Its subcellular location is the extracellular space. Contrapsin inhibits trypsin-like proteases. This is Serine proteinase inhibitor A3K (SERPINA3K) from Cavia porcellus (Guinea pig).